Consider the following 197-residue polypeptide: MYAYLKGIITKITAKYIVLETNGIGYILHVANPYAYSGQVNQEAQIYVHQVVREDAHLLYGFRSEDEKKLFLSLISVSGIGPVSALAIIAADDNAGLVQAIETKNITYLTKFPKIGKKTAQQMVLDLEGKVVVAGDGLPAKVAVQASAENQELEEAMEAMLALGYKATELKKIKKFFEGTTDTAENYIKSALKMLVK.

A domain I region spans residues 1–63 (MYAYLKGIIT…EDAHLLYGFR (63 aa)). The segment at 64 to 142 (SEDEKKLFLS…VAGDGLPAKV (79 aa)) is domain II. The tract at residues 143 to 147 (AVQAS) is flexible linker. Residues 148-197 (AENQELEEAMEAMLALGYKATELKKIKKFFEGTTDTAENYIKSALKMLVK) form a domain III region.

It belongs to the RuvA family. Homotetramer. Forms an RuvA(8)-RuvB(12)-Holliday junction (HJ) complex. HJ DNA is sandwiched between 2 RuvA tetramers; dsDNA enters through RuvA and exits via RuvB. An RuvB hexamer assembles on each DNA strand where it exits the tetramer. Each RuvB hexamer is contacted by two RuvA subunits (via domain III) on 2 adjacent RuvB subunits; this complex drives branch migration. In the full resolvosome a probable DNA-RuvA(4)-RuvB(12)-RuvC(2) complex forms which resolves the HJ.

It localises to the cytoplasm. Its function is as follows. The RuvA-RuvB-RuvC complex processes Holliday junction (HJ) DNA during genetic recombination and DNA repair, while the RuvA-RuvB complex plays an important role in the rescue of blocked DNA replication forks via replication fork reversal (RFR). RuvA specifically binds to HJ cruciform DNA, conferring on it an open structure. The RuvB hexamer acts as an ATP-dependent pump, pulling dsDNA into and through the RuvAB complex. HJ branch migration allows RuvC to scan DNA until it finds its consensus sequence, where it cleaves and resolves the cruciform DNA. In Streptococcus pneumoniae serotype 2 (strain D39 / NCTC 7466), this protein is Holliday junction branch migration complex subunit RuvA.